The chain runs to 398 residues: Putative FBD-associated F-box protein At5g56700 (398 aa).

One can recognise an F-box domain in the interval 1 to 47 (MAKISDLSDELLVKILSFLPTKEAVSTSCLSKQWEFLWMWLSKLEFY). Residues 340–388 (WKNNKSSVPKCLLESLETFEFAGYIGTPEERDFLSYIFKHARCLKSSSI) enclose the FBD domain.

The protein is Putative FBD-associated F-box protein At5g56700 of Arabidopsis thaliana (Mouse-ear cress).